The primary structure comprises 385 residues: 8-amino-7-oxononanoate synthase (385 aa).

Arg21 provides a ligand contact to substrate. 108–109 (GF) serves as a coordination point for pyridoxal 5'-phosphate. Substrate is bound at residue His133. Ser179, His207, and Thr233 together coordinate pyridoxal 5'-phosphate. Lys236 is modified (N6-(pyridoxal phosphate)lysine). Thr352 contributes to the substrate binding site.

Belongs to the class-II pyridoxal-phosphate-dependent aminotransferase family. BioF subfamily. In terms of assembly, homodimer. It depends on pyridoxal 5'-phosphate as a cofactor.

The enzyme catalyses 6-carboxyhexanoyl-[ACP] + L-alanine + H(+) = (8S)-8-amino-7-oxononanoate + holo-[ACP] + CO2. It participates in cofactor biosynthesis; biotin biosynthesis. In terms of biological role, catalyzes the decarboxylative condensation of pimeloyl-[acyl-carrier protein] and L-alanine to produce 8-amino-7-oxononanoate (AON), [acyl-carrier protein], and carbon dioxide. This is 8-amino-7-oxononanoate synthase from Salmonella agona (strain SL483).